A 342-amino-acid polypeptide reads, in one-letter code: Dihydroorotate dehydrogenase (quinone) (342 aa).

FMN is bound by residues 61–65 (AGLDK) and Thr-85. Position 65 (Lys-65) interacts with substrate. 110-114 (NRMGF) contacts substrate. Residues Asn-138 and Asn-171 each coordinate FMN. Asn-171 serves as a coordination point for substrate. The Nucleophile role is filled by Ser-174. Asn-176 contacts substrate. FMN is bound by residues Lys-216 and Thr-244. 245–246 (NT) serves as a coordination point for substrate. Residues Gly-267, Gly-296, and 317–318 (YS) each bind FMN.

Belongs to the dihydroorotate dehydrogenase family. Type 2 subfamily. In terms of assembly, monomer. The cofactor is FMN.

It localises to the cell membrane. It catalyses the reaction (S)-dihydroorotate + a quinone = orotate + a quinol. It functions in the pathway pyrimidine metabolism; UMP biosynthesis via de novo pathway; orotate from (S)-dihydroorotate (quinone route): step 1/1. Functionally, catalyzes the conversion of dihydroorotate to orotate with quinone as electron acceptor. In Cellvibrio japonicus (strain Ueda107) (Pseudomonas fluorescens subsp. cellulosa), this protein is Dihydroorotate dehydrogenase (quinone).